The chain runs to 436 residues: tRNA-2-methylthio-N(6)-dimethylallyladenosine synthase (436 aa).

Residues 1-115 (MRVFFKTYGC…IAEVLQKAAR (115 aa)) enclose the MTTase N-terminal domain. [4Fe-4S] cluster contacts are provided by cysteine 10, cysteine 46, cysteine 80, cysteine 151, cysteine 155, and cysteine 158. The 232-residue stretch at 137 to 368 (RFSKHHAWIT…LELQKQINRE (232 aa)) folds into the Radical SAM core domain. In terms of domain architecture, TRAM spans 371–432 (MQYLGKVVEI…AGPLYGKLQK (62 aa)).

This sequence belongs to the methylthiotransferase family. MiaB subfamily. In terms of assembly, monomer. [4Fe-4S] cluster serves as cofactor.

The protein localises to the cytoplasm. The enzyme catalyses N(6)-dimethylallyladenosine(37) in tRNA + (sulfur carrier)-SH + AH2 + 2 S-adenosyl-L-methionine = 2-methylsulfanyl-N(6)-dimethylallyladenosine(37) in tRNA + (sulfur carrier)-H + 5'-deoxyadenosine + L-methionine + A + S-adenosyl-L-homocysteine + 2 H(+). In terms of biological role, catalyzes the methylthiolation of N6-(dimethylallyl)adenosine (i(6)A), leading to the formation of 2-methylthio-N6-(dimethylallyl)adenosine (ms(2)i(6)A) at position 37 in tRNAs that read codons beginning with uridine. In Pseudothermotoga lettingae (strain ATCC BAA-301 / DSM 14385 / NBRC 107922 / TMO) (Thermotoga lettingae), this protein is tRNA-2-methylthio-N(6)-dimethylallyladenosine synthase.